The sequence spans 146 residues: uncharacterized protein (146 aa).

A run of 4 helical transmembrane segments spans residues 1–21, 35–55, 87–107, and 111–131; these read MFAN…AASL, AAVY…LFVG, GGAG…GVGH, and AIAA…GGHL.

The protein resides in the cell membrane. This is an uncharacterized protein from Mycobacterium tuberculosis (strain CDC 1551 / Oshkosh).